The following is a 708-amino-acid chain: Elongation factor G (708 aa).

One can recognise a tr-type G domain in the interval 9–289 (MFTRNIGIMA…AVCAFLPSPE (281 aa)). GTP contacts are provided by residues 18 to 25 (AHIDAGKT), 86 to 90 (DTPGH), and 140 to 143 (NKMD).

The protein belongs to the TRAFAC class translation factor GTPase superfamily. Classic translation factor GTPase family. EF-G/EF-2 subfamily.

Its subcellular location is the cytoplasm. Functionally, catalyzes the GTP-dependent ribosomal translocation step during translation elongation. During this step, the ribosome changes from the pre-translocational (PRE) to the post-translocational (POST) state as the newly formed A-site-bound peptidyl-tRNA and P-site-bound deacylated tRNA move to the P and E sites, respectively. Catalyzes the coordinated movement of the two tRNA molecules, the mRNA and conformational changes in the ribosome. The polypeptide is Elongation factor G (Parabacteroides distasonis (strain ATCC 8503 / DSM 20701 / CIP 104284 / JCM 5825 / NCTC 11152)).